The sequence spans 445 residues: UPF0210 protein SPG_0223 (445 aa).

Belongs to the UPF0210 family. In terms of assembly, homodimer.

The protein is UPF0210 protein SPG_0223 of Streptococcus pneumoniae serotype 19F (strain G54).